The primary structure comprises 377 residues: GTPase Obg (377 aa).

The Obg domain occupies 1–159 (MKFVDEATIE…RRLRMELKVL (159 aa)). The interval 127–148 (NIHFKSSTNRAPRQWTPGKEGE) is disordered. The OBG-type G domain maps to 160 to 336 (ADVGLLGLPN…LIWALQDYLD (177 aa)). Residues 166 to 173 (GLPNAGKS), 191 to 195 (FTTLH), 213 to 216 (DIPG), 288 to 291 (NKLD), and 317 to 319 (SGL) each bind GTP. Positions 173 and 193 each coordinate Mg(2+). The tract at residues 339 to 377 (KRKDQDAQDQADGTYVFEDPRFDASRGGAAPATPPGGDE) is disordered.

It belongs to the TRAFAC class OBG-HflX-like GTPase superfamily. OBG GTPase family. As to quaternary structure, monomer. Mg(2+) serves as cofactor.

The protein localises to the cytoplasm. An essential GTPase which binds GTP, GDP and possibly (p)ppGpp with moderate affinity, with high nucleotide exchange rates and a fairly low GTP hydrolysis rate. Plays a role in control of the cell cycle, stress response, ribosome biogenesis and in those bacteria that undergo differentiation, in morphogenesis control. This chain is GTPase Obg, found in Bordetella bronchiseptica (strain ATCC BAA-588 / NCTC 13252 / RB50) (Alcaligenes bronchisepticus).